The following is a 192-amino-acid chain: E3 ubiquitin-protein ligase RNF183 (192 aa).

Residues Met1–Arg161 lie on the Cytoplasmic side of the membrane. The RING-type zinc finger occupies Cys13–Arg60. A helical; Anchor for type IV membrane protein membrane pass occupies residues Ile162–Phe182. Residues Trp183–Gly192 lie on the Lumenal side of the membrane.

In terms of assembly, interacts with FATE1. Interacts with SEC16A. Interacts with BCL2L1. Post-translationally, autoubiquitinated (in vitro). As to expression, kidney and testis.

It is found in the endoplasmic reticulum membrane. It localises to the endoplasmic reticulum. Its subcellular location is the golgi apparatus. The protein localises to the cis-Golgi network membrane. The protein resides in the lysosome membrane. The catalysed reaction is S-ubiquitinyl-[E2 ubiquitin-conjugating enzyme]-L-cysteine + [acceptor protein]-L-lysine = [E2 ubiquitin-conjugating enzyme]-L-cysteine + N(6)-ubiquitinyl-[acceptor protein]-L-lysine.. The protein operates within protein modification; protein ubiquitination. Acts as an E3 ubiquitin ligase catalyzing the covalent attachment of ubiquitin moieties onto substrate proteins. Triggers apoptosis in response to prolonged ER stress by mediating the polyubiquitination and subsequent proteasomal degradation of BCL2L1. May collaborate with FATE1 to restrain BIK protein levels thus regulating apoptotic signaling. The chain is E3 ubiquitin-protein ligase RNF183 (RNF183) from Homo sapiens (Human).